Here is a 492-residue protein sequence, read N- to C-terminus: MSIPGTNASSSQASNPLNSPVTIPAVMFIFGVVGNLVAIVVLCKSRKEQKETTFYTLVCGLAVTDLLGTLLVSPVTIATYLKGQWPGGHALCEYSTFILLFFGLSGLSIICAMSIERYLAINHAYFYSHYVDKRLAGLTLFAVYASNVLFCALPSMGLGSSRLQYPATWCFIDWTTNVTAHAAFSYMYAGFSSFLILATVLCNVLVCGALLRMHRQFMRRTSLGTEQQHHAAAAAVALAPTACRAPPAASSPALPRLSDFRRRRSFRRIAGAEIQMVILLIATSLVVLICSIPLVVRVFVNQLYRPQLEPVIGKNPDLQAIRIASVSPILDPWIYILLRKTVLSKAIEKIKCLFCRIGGSRRERSGPHCSDSRRTSSAVSGHSRSFLSRELKEISSTSQTLLYTPELSENGLGGGRNLLPGVPGVGLTQIDSTSLRTLRISETSDSSQGQDSESFLLVDEVGGSCRAGPAPKGSSLQVTFPSETLNLSEKCI.

Residues methionine 1 to serine 19 lie on the Extracellular side of the membrane. Residue asparagine 7 is glycosylated (N-linked (GlcNAc...) asparagine). A helical transmembrane segment spans residues proline 20 to cysteine 43. Topologically, residues lysine 44–tyrosine 55 are cytoplasmic. Residues threonine 56–threonine 79 traverse the membrane as a helical segment. Residues tyrosine 80–threonine 96 lie on the Extracellular side of the membrane. The cysteines at positions 92 and 170 are disulfide-linked. Residues phenylalanine 97–isoleucine 115 form a helical membrane-spanning segment. Residues glutamate 116 to leucine 135 are Cytoplasmic-facing. A helical transmembrane segment spans residues alanine 136–serine 160. The Extracellular segment spans residues serine 161 to phenylalanine 184. The chain crosses the membrane as a helical span at residues serine 185–leucine 211. At arginine 212–glutamate 273 the chain is on the cytoplasmic side. The chain crosses the membrane as a helical span at residues isoleucine 274–asparagine 301. Topologically, residues glutamine 302–leucine 318 are extracellular. A helical transmembrane segment spans residues glutamine 319–leucine 338. The Cytoplasmic segment spans residues arginine 339–isoleucine 492. Residues arginine 361 to arginine 374 show a composition bias toward basic and acidic residues. The segment at arginine 361–serine 383 is disordered. Phosphoserine is present on residues serine 380, serine 383, serine 385, and serine 388.

The protein belongs to the G-protein coupled receptor 1 family. In terms of assembly, interacts with FEM1A. Post-translationally, phosphorylation mediates agonist-mediated desensitization by promoting cytoplasmic retention.

It is found in the cell membrane. Functionally, receptor for prostaglandin E2 (PGE2). The activity of this receptor is mediated by G(s) proteins that stimulate adenylate cyclase. Has a relaxing effect on smooth muscle. May play an important role in regulating renal hemodynamics, intestinal epithelial transport, adrenal aldosterone secretion, and uterine function. The polypeptide is Prostaglandin E2 receptor EP4 subtype (PTGER4) (Bos taurus (Bovine)).